A 103-amino-acid chain; its full sequence is Large ribosomal subunit protein uL24 (103 aa).

The protein belongs to the universal ribosomal protein uL24 family. As to quaternary structure, part of the 50S ribosomal subunit.

One of two assembly initiator proteins, it binds directly to the 5'-end of the 23S rRNA, where it nucleates assembly of the 50S subunit. Its function is as follows. One of the proteins that surrounds the polypeptide exit tunnel on the outside of the subunit. The protein is Large ribosomal subunit protein uL24 of Sinorhizobium medicae (strain WSM419) (Ensifer medicae).